The sequence spans 418 residues: Tyrosine--tRNA ligase (418 aa).

Y34 serves as a coordination point for L-tyrosine. The 'HIGH' region signature appears at 39–48 (PTADSLHLGH). Y169 and Q173 together coordinate L-tyrosine. A 'KMSKS' region motif is present at residues 229–233 (KFGKS). An ATP-binding site is contributed by K232. One can recognise an S4 RNA-binding domain in the interval 352–418 (LNLVDMLVTA…GKKKYAVLTY (67 aa)).

This sequence belongs to the class-I aminoacyl-tRNA synthetase family. TyrS type 1 subfamily. As to quaternary structure, homodimer.

The protein resides in the cytoplasm. The catalysed reaction is tRNA(Tyr) + L-tyrosine + ATP = L-tyrosyl-tRNA(Tyr) + AMP + diphosphate + H(+). Its function is as follows. Catalyzes the attachment of tyrosine to tRNA(Tyr) in a two-step reaction: tyrosine is first activated by ATP to form Tyr-AMP and then transferred to the acceptor end of tRNA(Tyr). This is Tyrosine--tRNA ligase from Streptococcus pyogenes serotype M6 (strain ATCC BAA-946 / MGAS10394).